Consider the following 430-residue polypeptide: GTPase Obg (430 aa).

Residues 1–158 (MFVDQVKISL…LEVTLELKLL (158 aa)) enclose the Obg domain. Positions 118–145 (RGGRGGRGNSRFATPRNPAPDFSENGEP) are disordered. One can recognise an OBG-type G domain in the interval 159–329 (ADVGLVGFPS…LLYQIADKLE (171 aa)). GTP is bound by residues 165 to 172 (GFPSVGKS), 190 to 194 (FTTIK), 212 to 215 (DLPG), 282 to 285 (NKMD), and 310 to 312 (STI). Mg(2+) contacts are provided by Ser-172 and Thr-192. An OCT domain is found at 352–430 (KHTPSADKFT…ILGGEFEFVE (79 aa)).

It belongs to the TRAFAC class OBG-HflX-like GTPase superfamily. OBG GTPase family. Monomer. It depends on Mg(2+) as a cofactor.

It is found in the cytoplasm. Its function is as follows. An essential GTPase which binds GTP, GDP and possibly (p)ppGpp with moderate affinity, with high nucleotide exchange rates and a fairly low GTP hydrolysis rate. Plays a role in control of the cell cycle, stress response, ribosome biogenesis and in those bacteria that undergo differentiation, in morphogenesis control. The chain is GTPase Obg from Staphylococcus epidermidis (strain ATCC 35984 / DSM 28319 / BCRC 17069 / CCUG 31568 / BM 3577 / RP62A).